We begin with the raw amino-acid sequence, 420 residues long: Probable aminotransferase aclI (420 aa).

Residue Lys264 is modified to N6-(pyridoxal phosphate)lysine.

The protein belongs to the class-I pyridoxal-phosphate-dependent aminotransferase family. The cofactor is pyridoxal 5'-phosphate.

It participates in mycotoxin biosynthesis. Probable aminotransferase; part of the gene cluster that mediates the biosynthesis of aspirochlorine (or antibiotic A30641), an unusual halogenated spiro compound with distinctive antifungal properties due to selective inhibition of protein biosynthesis, and which is also active against bacteria, viruses, and murine tumor cells. The non-ribosomal peptide synthetase (NRPS) aclP is responsible the formation of the diketopiperazine (DKP) core from the condensation of 2 phenylalanine residues. One Phe residue is tailored into chlorotyrosine by hydroxylation and chlorination, whereas the second Phe undergoes an unprecedented C-C bond cleavage to be converted into glycine. After formation of the DKP, sulfur is incorporated into the DKP by conjugation with glutathione by aclG, followed by its stepwise degradation to the thiol by aclI, aclJ and aclK, and the dithiol oxidation by aclT. In addition, oxygenases (aclB, aclC, aclL and aclO) and O-methyltransferases (aclM and aclU) act as tailoring enzymes to produce the intermediate dechloroaspirochlorine. Ultimately, chlorination of dechloroaspirochlorine by the halogenase aclH is the last step in the aspirochlorine pathway. In Aspergillus oryzae (strain ATCC 42149 / RIB 40) (Yellow koji mold), this protein is Probable aminotransferase aclI.